Consider the following 95-residue polypeptide: Acylphosphatase (95 aa).

Positions 6–94 (RVRVIVKGIV…EDFTGFSVRY (89 aa)) constitute an Acylphosphatase-like domain. Catalysis depends on residues R21 and N39.

This sequence belongs to the acylphosphatase family.

It carries out the reaction an acyl phosphate + H2O = a carboxylate + phosphate + H(+). The polypeptide is Acylphosphatase (acyP) (Caldivirga maquilingensis (strain ATCC 700844 / DSM 13496 / JCM 10307 / IC-167)).